Reading from the N-terminus, the 116-residue chain is Protein Rev (116 aa).

S5 carries the post-translational modification Phosphoserine; by host CK2. A homomultimerization region spans residues 18–26 (YIKILYQSN). The Nuclear localization signal and RNA-binding (RRE) motif lies at 34 to 50 (TRKARRNRRRRWRARQR). The Nuclear export signal and binding to XPO1 signature appears at 73-84 (LQLPLLEKLHIN). The disordered stretch occupies residues 90–116 (GQGTEKGVGSPQISVESRAVLGSGTKE). Position 99 is a phosphoserine; by host (S99).

The protein belongs to the HIV-1 REV protein family. As to quaternary structure, homomultimer; when bound to the RRE. Multimeric assembly is essential for activity and may involve XPO1. Binds to human KPNB1, XPO1, TNPO1, RANBP5 and IPO7. Interacts with the viral Integrase. Interacts with human KHDRBS1. Interacts with human NAP1; this interaction decreases Rev multimerization and stimulates its activity. Interacts with human DEAD-box helicases DDX3 and DDX24; these interactions may serve for viral RNA export to the cytoplasm and packaging, respectively. Interacts with human PSIP1; this interaction may inhibit HIV-1 DNA integration by promoting dissociation of the Integrase-LEDGF/p75 complex. In terms of processing, asymmetrically arginine dimethylated at one site by host PRMT6. Methylation impairs the RNA-binding activity and export of viral RNA from the nucleus to the cytoplasm. Phosphorylated by protein kinase CK2. Presence of, and maybe binding to the N-terminus of the regulatory beta subunit of CK2 is necessary for CK2-mediated Rev's phosphorylation.

The protein resides in the host nucleus. It is found in the host nucleolus. It localises to the host cytoplasm. Escorts unspliced or incompletely spliced viral pre-mRNAs (late transcripts) out of the nucleus of infected cells. These pre-mRNAs carry a recognition sequence called Rev responsive element (RRE) located in the env gene, that is not present in fully spliced viral mRNAs (early transcripts). This function is essential since most viral proteins are translated from unspliced or partially spliced pre-mRNAs which cannot exit the nucleus by the pathway used by fully processed cellular mRNAs. Rev itself is translated from a fully spliced mRNA that readily exits the nucleus. Rev's nuclear localization signal (NLS) binds directly to KPNB1/Importin beta-1 without previous binding to KPNA1/Importin alpha-1. KPNB1 binds to the GDP bound form of RAN (Ran-GDP) and targets Rev to the nucleus. In the nucleus, the conversion from Ran-GDP to Ran-GTP dissociates Rev from KPNB1 and allows Rev's binding to the RRE in viral pre-mRNAs. Rev multimerization on the RRE via cooperative assembly exposes its nuclear export signal (NES) to the surface. Rev can then form a complex with XPO1/CRM1 and Ran-GTP, leading to nuclear export of the complex. Conversion from Ran-GTP to Ran-GDP mediates dissociation of the Rev/RRE/XPO1/RAN complex, so that Rev can return to the nucleus for a subsequent round of export. Beside KPNB1, also seems to interact with TNPO1/Transportin-1, RANBP5/IPO5 and IPO7/RANBP7 for nuclear import. The nucleoporin-like HRB/RIP is an essential cofactor that probably indirectly interacts with Rev to release HIV RNAs from the perinuclear region to the cytoplasm. This chain is Protein Rev, found in Human immunodeficiency virus type 1 group M subtype F2 (isolate MP257) (HIV-1).